We begin with the raw amino-acid sequence, 351 residues long: Transmembrane protein 255A (351 aa).

Transmembrane regions (helical) follow at residues 30–50, 57–77, 89–109, and 226–246; these read IYVTVTLLIVSVLILTVGLAA, VTVGGYYPGVILGFGSFLGII, LVASIVFISFGVIAAFCCAIV, and TILNIVGLFLGIITAAVLGGF. The segment at 302–331 is disordered; sequence FPSSPPSGLSDEQEPQSPSPSPSYMWSSSA.

This sequence belongs to the TMEM255 family.

It localises to the membrane. The polypeptide is Transmembrane protein 255A (Tmem255a) (Rattus norvegicus (Rat)).